A 283-amino-acid chain; its full sequence is Non-selective voltage-gated ion channel VDAC1 (283 aa).

Residue Ala2 is modified to N-acetylalanine. Position 12 (Lys12) interacts with ATP. A Glycyl lysine isopeptide (Lys-Gly) (interchain with G-Cter in ubiquitin) cross-link involves residue Lys12. Ser13 bears the Phosphoserine mark. Thr19 is modified (phosphothreonine). Residue Lys20 participates in ATP binding. Position 20 is an N6-acetyllysine; alternate (Lys20). Residue Lys20 is modified to N6-succinyllysine; alternate. Residue Lys20 forms a Glycyl lysine isopeptide (Lys-Gly) (interchain with G-Cter in ubiquitin); alternate linkage. 2 beta stranded membrane-spanning segments follow: residues 26–35 (LIKLDLKTKS) and 39–47 (LEFTSSGSA). Glycyl lysine isopeptide (Lys-Gly) (interchain with G-Cter in ubiquitin) cross-links involve residues Lys53 and Lys61. The chain crosses the membrane as a beta stranded span at residues 54 to 64 (VTGSLETKYRW). Residue Tyr67 is modified to Phosphotyrosine. 3 beta stranded membrane passes run 69–76 (LTFTEKWN), 80–89 (TLGTEITVED), and 95–104 (LKLTFDSSFS). Thr107 bears the Phosphothreonine mark. N6-acetyllysine; alternate is present on Lys109. A Glycyl lysine isopeptide (Lys-Gly) (interchain with G-Cter in ubiquitin); alternate cross-link involves residue Lys109. A Glycyl lysine isopeptide (Lys-Gly) (interchain with G-Cter in ubiquitin) cross-link involves residue Lys110. Beta stranded transmembrane passes span 111-120 (NAKIKTGYKR), 123-130 (INLGCDMD), 137-145 (SIRGALVLG), and 150-158 (LAGYQMNFE). Lys161 participates in a covalent cross-link: Glycyl lysine isopeptide (Lys-Gly) (interchain with G-Cter in ubiquitin). Beta stranded transmembrane passes span 163–175 (RVTQ…GYKT), 178–185 (FQLHTNVN), 189–198 (EFGGSIYQKV), 202–211 (LETAVNLAWT), 218–227 (RFGIAAKYQI), and 231–238 (ACFSAKVN). The residue at position 193 (Ser193) is a Phosphoserine; by NEK1. At Ser240 the chain carries Phosphoserine. 242–244 (LIG) is a binding site for NAD(+). The beta stranded transmembrane segment at 242–251 (LIGLGYTQTL) threads the bilayer. Lys252 bears the N6-acetyllysine mark. A beta stranded transmembrane segment spans residues 254 to 263 (GIKLTLSALL). An NAD(+)-binding site is contributed by 260–264 (SALLD). Lys266 bears the N6-acetyllysine; alternate mark. Lys266 is covalently cross-linked (Glycyl lysine isopeptide (Lys-Gly) (interchain with G-Cter in ubiquitin); alternate). The beta stranded transmembrane segment at 273–282 (HKLGLGLEFQ) threads the bilayer. Lys274 participates in a covalent cross-link: Glycyl lysine isopeptide (Lys-Gly) (interchain with G-Cter in ubiquitin).

This sequence belongs to the eukaryotic mitochondrial porin family. Homodimer and homotrimer; in response to cyclic AMP or calcium; oligomerization is required for scramblase activity. Component of the mitochondrial permeability transition pore complex (mPTPC), at least composed of SPG7, VDAC1 and PPIF. Interacts with SPG7, NIPSNAP2 and SLC25A30. Interacts with hexokinases including HK1. The HK1-VDAC1 complex interacts with ATF2. Interacts with BCL2L1. Interacts with BAK1. Interacts with RTL10/BOP (via BH3 domain). Interacts with amyloid-beta and APP; induces VDAC1 dephosphorylation. Interacts with TMEM41B. Interacts with BCAP31. Interacts with HSPA9; this interaction couples ITPR1 to VDAC1. As to quaternary structure, (Microbial infection) Interacts with influenza A virus PB1-F2 protein. Post-translationally, phosphorylation at Ser-193 by NEK1 promotes the closed conformational state preventing excessive mitochondrial membrane permeability and subsequent apoptotic cell death after injury. Phosphorylation by the AKT-GSK3B axis stabilizes the protein probably by preventing ubiquitin-mediated proteasomal degradation. In terms of processing, ubiquitinated. Undergoes monoubiquitination and polyubiquitination by PRKN; monoubiquitination at Lys-274 inhibits apoptosis, whereas polyubiquitination leads to its degradation and promotes mitophagy. Deubiquitinated by USP30. As to expression, expressed in erythrocytes (at protein level). Expressed in heart, liver and skeletal muscle.

The protein localises to the mitochondrion outer membrane. It is found in the cell membrane. Its subcellular location is the membrane raft. It carries out the reaction chloride(in) = chloride(out). The catalysed reaction is K(+)(in) = K(+)(out). It catalyses the reaction ATP(in) = ATP(out). The enzyme catalyses Ca(2+)(in) = Ca(2+)(out). It carries out the reaction Na(+)(in) = Na(+)(out). The catalysed reaction is Mg(2+)(in) = Mg(2+)(out). It catalyses the reaction L-glutamate(out) = L-glutamate(in). The enzyme catalyses dopamine(out) = dopamine(in). It carries out the reaction acetylcholine(in) = acetylcholine(out). The catalysed reaction is Fe(III)-[cytochrome c](out) = Fe(III)-[cytochrome c](in). It catalyses the reaction a 1,2-diacyl-sn-glycero-3-phosphocholine(in) = a 1,2-diacyl-sn-glycero-3-phosphocholine(out). The enzyme catalyses a 1,2-diacyl-sn-glycero-3-phospho-L-serine(in) = a 1,2-diacyl-sn-glycero-3-phospho-L-serine(out). Inhibited by nitric oxide. Non-selective voltage-gated ion channel that mediates the transport of anions and cations through the mitochondrion outer membrane and plasma membrane. The channel at the outer mitochondrial membrane allows diffusion of small hydrophilic molecules; in the plasma membrane it is involved in cell volume regulation and apoptosis. It adopts an open conformation at low or zero membrane potential and a closed conformation at potentials above 30-40 mV. The open state has a weak anion selectivity whereas the closed state is cation-selective. Binds various signaling molecules, including the sphingolipid ceramide, the phospholipid phosphatidylcholine, and the sterols cholesterol and oxysterol. In depolarized mitochondria, acts downstream of PRKN and PINK1 to promote mitophagy or prevent apoptosis; polyubiquitination by PRKN promotes mitophagy, while monoubiquitination by PRKN decreases mitochondrial calcium influx which ultimately inhibits apoptosis. May participate in the formation of the permeability transition pore complex (PTPC) responsible for the release of mitochondrial products that triggers apoptosis. May mediate ATP export from cells. Part of a complex composed of HSPA9, ITPR1 and VDAC1 that regulates mitochondrial calcium-dependent apoptosis by facilitating calcium transport from the ER lumen to the mitochondria intermembrane space thus providing calcium for the downstream calcium channel MCU that directly releases it into mitochondria matrix. Mediates cytochrome c efflux. Its function is as follows. Catalyzes the scrambling of phospholipids across the outer mitochondrial membrane; the mechanism is unrelated to channel activity and is capable of translocating both anionic and zwitterionic phospholipids. The chain is Non-selective voltage-gated ion channel VDAC1 from Homo sapiens (Human).